Consider the following 388-residue polypeptide: Succinate--CoA ligase [ADP-forming] subunit beta (388 aa).

Positions 9 to 244 constitute an ATP-grasp domain; sequence KQLFARYGLP…QSQEDPRAAQ (236 aa). ATP contacts are provided by residues lysine 46, 53–55, glutamate 99, threonine 102, and glutamate 107; that span reads GRG. Mg(2+) contacts are provided by asparagine 199 and aspartate 213. Substrate-binding positions include asparagine 264 and 321 to 323; that span reads GIV.

Belongs to the succinate/malate CoA ligase beta subunit family. Heterotetramer of two alpha and two beta subunits. Mg(2+) serves as cofactor.

The catalysed reaction is succinate + ATP + CoA = succinyl-CoA + ADP + phosphate. It catalyses the reaction GTP + succinate + CoA = succinyl-CoA + GDP + phosphate. It functions in the pathway carbohydrate metabolism; tricarboxylic acid cycle; succinate from succinyl-CoA (ligase route): step 1/1. In terms of biological role, succinyl-CoA synthetase functions in the citric acid cycle (TCA), coupling the hydrolysis of succinyl-CoA to the synthesis of either ATP or GTP and thus represents the only step of substrate-level phosphorylation in the TCA. The beta subunit provides nucleotide specificity of the enzyme and binds the substrate succinate, while the binding sites for coenzyme A and phosphate are found in the alpha subunit. The polypeptide is Succinate--CoA ligase [ADP-forming] subunit beta (Shigella flexneri serotype 5b (strain 8401)).